A 413-amino-acid polypeptide reads, in one-letter code: 2,3-diketo-5-methylthiopentyl-1-phosphate enolase (413 aa).

The active-site Proton acceptor is Lys98. Residues Lys147, 173 to 176 (KDDE), His264, Gly337, and 359 to 360 (GG) contribute to the substrate site. Lys173, Asp175, and Glu176 together coordinate Mg(2+). Position 173 is an N6-carboxylysine (Lys173).

The protein belongs to the RuBisCO large chain family. Type IV subfamily. In terms of assembly, homodimer. Mg(2+) serves as cofactor.

It carries out the reaction 5-methylsulfanyl-2,3-dioxopentyl phosphate = 2-hydroxy-5-methylsulfanyl-3-oxopent-1-enyl phosphate. The protein operates within amino-acid biosynthesis; L-methionine biosynthesis via salvage pathway; L-methionine from S-methyl-5-thio-alpha-D-ribose 1-phosphate: step 3/6. Its function is as follows. Catalyzes the enolization of 2,3-diketo-5-methylthiopentyl-1-phosphate (DK-MTP-1-P) into 2-hydroxy-3-keto-5-methylthiopentenyl-1-phosphate (HK-MTPenyl-1-P). The protein is 2,3-diketo-5-methylthiopentyl-1-phosphate enolase (mtnW) of Geobacillus kaustophilus (strain HTA426).